The following is a 243-amino-acid chain: MAHITRFEAPWFLNLSKKEYKWTIRANPGPHKLSESIPLALLLKHYLNVAETTREAKRLVVEGKIMVDGRVRKDYKFPVGLMDVISIPSSDLYFRIVPDNIKYLMPVKISKEDAKYKFVRIVNKTTNKNGNIQLNLEDGRNILIPKEKVPEMNYPTLTTLKIEIPSQNIIKSYELSEGKYAIIIGGRNVGLHGVIKTIQYAKYKKRKYSIVTIEQKNGESVQTNLQNVMVIGDSEIDPNVGVR.

Positions 37 to 99 (IPLALLLKHY…SDLYFRIVPD (63 aa)) constitute an S4 RNA-binding domain.

Belongs to the eukaryotic ribosomal protein eS4 family.

In Sulfurisphaera tokodaii (strain DSM 16993 / JCM 10545 / NBRC 100140 / 7) (Sulfolobus tokodaii), this protein is Small ribosomal subunit protein eS4 (rps4e).